Here is a 508-residue protein sequence, read N- to C-terminus: Pentatricopeptide repeat-containing protein At3g04130, mitochondrial (508 aa).

Residues methionine 1 to leucine 74 constitute a mitochondrion transit peptide. PPR repeat units follow at residues serine 120–aspartate 150, threonine 154–lysine 188, asparagine 189–histidine 219, asparagine 223–proline 257, cysteine 258–proline 292, asparagine 293–proline 327, aspartate 328–isoleucine 363, asparagine 364–asparagine 398, aspartate 400–serine 434, and aspartate 436–proline 470.

The protein belongs to the PPR family. P subfamily.

The protein localises to the mitochondrion. This is Pentatricopeptide repeat-containing protein At3g04130, mitochondrial from Arabidopsis thaliana (Mouse-ear cress).